A 101-amino-acid chain; its full sequence is Small ribosomal subunit protein uS14 (101 aa).

The interval 33 to 69 is disordered; that stretch reads SQDASYEEKIDASTKLQKLPRDSSPSRHRNRCELSGR. Basic and acidic residues predominate over residues 51 to 68; it reads LPRDSSPSRHRNRCELSG.

This sequence belongs to the universal ribosomal protein uS14 family. As to quaternary structure, part of the 30S ribosomal subunit. Contacts proteins S3 and S10.

Binds 16S rRNA, required for the assembly of 30S particles and may also be responsible for determining the conformation of the 16S rRNA at the A site. The sequence is that of Small ribosomal subunit protein uS14 from Xanthomonas axonopodis pv. citri (strain 306).